Reading from the N-terminus, the 214-residue chain is Octanoyltransferase (214 aa).

In terms of domain architecture, BPL/LPL catalytic spans 29 to 214 (SETLDEIWVL…QHLQKQLIPS (186 aa)). Residues 69–76 (RGGEITYH), 146–148 (ALG), and 159–161 (GLA) contribute to the substrate site. Residue Cys177 is the Acyl-thioester intermediate of the active site.

The protein belongs to the LipB family.

The protein localises to the cytoplasm. It catalyses the reaction octanoyl-[ACP] + L-lysyl-[protein] = N(6)-octanoyl-L-lysyl-[protein] + holo-[ACP] + H(+). The protein operates within protein modification; protein lipoylation via endogenous pathway; protein N(6)-(lipoyl)lysine from octanoyl-[acyl-carrier-protein]: step 1/2. In terms of biological role, catalyzes the transfer of endogenously produced octanoic acid from octanoyl-acyl-carrier-protein onto the lipoyl domains of lipoate-dependent enzymes. Lipoyl-ACP can also act as a substrate although octanoyl-ACP is likely to be the physiological substrate. In Polynucleobacter necessarius subsp. necessarius (strain STIR1), this protein is Octanoyltransferase.